The sequence spans 300 residues: Spermine synthase SPE4 (300 aa).

Serine 5 bears the Phosphoserine mark. The region spanning 12–255 is the PABS domain; the sequence is DGWFREINDK…GQLGLIVCSN (244 aa). S-adenosyl 3-(methylsulfanyl)propylamine contacts are provided by residues glutamine 44, aspartate 99, glutamate 119, and 151-152; that span reads DG. Aspartate 174 acts as the Proton acceptor in catalysis. Aspartate 177 contacts spermidine.

Belongs to the spermidine/spermine synthase family.

It carries out the reaction S-adenosyl 3-(methylsulfanyl)propylamine + spermidine = spermine + S-methyl-5'-thioadenosine + H(+). Its pathway is amine and polyamine biosynthesis; spermine biosynthesis; spermine from spermidine: step 1/1. The chain is Spermine synthase SPE4 (SPE4) from Saccharomyces cerevisiae (strain ATCC 204508 / S288c) (Baker's yeast).